We begin with the raw amino-acid sequence, 371 residues long: Putative glutamate--cysteine ligase 2 (371 aa).

Belongs to the glutamate--cysteine ligase type 2 family. YbdK subfamily.

The catalysed reaction is L-cysteine + L-glutamate + ATP = gamma-L-glutamyl-L-cysteine + ADP + phosphate + H(+). Functionally, ATP-dependent carboxylate-amine ligase which exhibits weak glutamate--cysteine ligase activity. In Burkholderia lata (strain ATCC 17760 / DSM 23089 / LMG 22485 / NCIMB 9086 / R18194 / 383), this protein is Putative glutamate--cysteine ligase 2.